Consider the following 449-residue polypeptide: Phosphomannomutase (449 aa).

Residue Ser97 is the Phosphoserine intermediate of the active site. 4 residues coordinate Mg(2+): Ser97, Asp237, Asp239, and Asp241.

It belongs to the phosphohexose mutase family. Mg(2+) serves as cofactor.

The catalysed reaction is alpha-D-mannose 1-phosphate = D-mannose 6-phosphate. Its pathway is amino-acid biosynthesis. Its function is as follows. Catalyzes the formation of mannose-1-P from mannose-6-P. Can also use glucose-6-P. The sequence is that of Phosphomannomutase (manB) from Methanocaldococcus jannaschii (strain ATCC 43067 / DSM 2661 / JAL-1 / JCM 10045 / NBRC 100440) (Methanococcus jannaschii).